The primary structure comprises 489 residues: Virion host shutoff protein (489 aa).

Disordered regions lie at residues 110–135 (EEASDVDASPPPSPITDSRPSSAFSN), 142–161 (SLASGTRGTAGSGAALPSAA), 285–316 (RSQTRRAIRREHTSSRSTETRPPLPPAAGGTE), and 333–363 (YEDDEDLPLDPRDVTGGHPGPRSSSSEILTP). Residues 124–134 (ITDSRPSSAFS) are compositionally biased toward polar residues.

It belongs to the herpesviridae VHS protein family. In terms of assembly, interacts with human EIF4H, EIF4A1 and EIF4A2; interaction with eIF4AI and EIF4A2 presumably allows Vhs protein to associate with the eIF4F cap-binding complex.

The protein localises to the virion. Functionally, minor structural protein that acts as an endoribonuclease during lytic infection. Degrades host mRNAs in the cytoplasm by cutting them at preferred sites, including some in regions of translation initiation. Together with inhibition of host splicing by ICP27, contributes to an overall decrease in host protein synthesis. Also, after the onset of viral transcription, accelerates the turnover of viral mRNA, thereby facilitating the sequential expression of different classes of viral genes. Binds translation initiation factors eIF4H, eIF4AI, and eIF4AII, thereby may interact directly with the translation initiation complex and thus digest specifically mRNAs. Also impedes antigen presentation by major histocompatibility complex class I and class II molecules, inhibits secretion of cytokines that would otherwise recruit lymphocytes and neutrophils cells to the site of infection and blocks the activation of dendritic cells. Impedes the alpha/beta interferon-mediated response to infection by evading the cGAS/ STING-mediated DNA-sensing pathway and degrading CGAS via its RNase activity. In Human herpesvirus 1 (strain KOS) (HHV-1), this protein is Virion host shutoff protein (UL41).